The following is a 313-amino-acid chain: Elongation factor Ts (313 aa).

An involved in Mg(2+) ion dislocation from EF-Tu region spans residues threonine 82–valine 85.

This sequence belongs to the EF-Ts family.

The protein localises to the cytoplasm. Functionally, associates with the EF-Tu.GDP complex and induces the exchange of GDP to GTP. It remains bound to the aminoacyl-tRNA.EF-Tu.GTP complex up to the GTP hydrolysis stage on the ribosome. The protein is Elongation factor Ts of Nostoc sp. (strain PCC 7120 / SAG 25.82 / UTEX 2576).